A 295-amino-acid chain; its full sequence is Small ribosomal subunit biogenesis GTPase RsgA (295 aa).

A CP-type G domain is found at 65–223; sequence KNQLVRPPVA…VLDTPGFTAL (159 aa). GTP-binding positions include 114–117 and 165–173; these read NKVD and GPSGVGKSS. 4 residues coordinate Zn(2+): cysteine 246, cysteine 251, histidine 253, and cysteine 259.

Belongs to the TRAFAC class YlqF/YawG GTPase family. RsgA subfamily. In terms of assembly, monomer. Associates with 30S ribosomal subunit, binds 16S rRNA. The cofactor is Zn(2+).

Its subcellular location is the cytoplasm. One of several proteins that assist in the late maturation steps of the functional core of the 30S ribosomal subunit. Helps release RbfA from mature subunits. May play a role in the assembly of ribosomal proteins into the subunit. Circularly permuted GTPase that catalyzes slow GTP hydrolysis, GTPase activity is stimulated by the 30S ribosomal subunit. The chain is Small ribosomal subunit biogenesis GTPase RsgA from Caldanaerobacter subterraneus subsp. tengcongensis (strain DSM 15242 / JCM 11007 / NBRC 100824 / MB4) (Thermoanaerobacter tengcongensis).